Consider the following 95-residue polypeptide: Integration host factor subunit beta (95 aa).

The protein belongs to the bacterial histone-like protein family. Heterodimer of an alpha and a beta chain.

Functionally, this protein is one of the two subunits of integration host factor, a specific DNA-binding protein that functions in genetic recombination as well as in transcriptional and translational control. This chain is Integration host factor subunit beta, found in Klebsiella pneumoniae subsp. pneumoniae (strain ATCC 700721 / MGH 78578).